We begin with the raw amino-acid sequence, 917 residues long: Auxin response factor 17 (917 aa).

The TF-B3 DNA-binding region spans Phe134 to Asn236. A disordered region spans residues Ser571–Pro649. 2 stretches are compositionally biased toward low complexity: residues Leu576–Gln594 and Ser604–Thr620. In terms of domain architecture, PB1 spans Ala786–Glu870.

The protein belongs to the ARF family. In terms of assembly, homodimers and heterodimers. As to expression, expressed in roots, culms, leaves and young panicles.

It localises to the nucleus. In terms of biological role, auxin response factors (ARFs) are transcriptional factors that bind specifically to the DNA sequence 5'-TGTCTC-3' found in the auxin-responsive promoter elements (AuxREs). In Oryza sativa subsp. japonica (Rice), this protein is Auxin response factor 17 (ARF17).